Reading from the N-terminus, the 261-residue chain is Acyl-[acyl-carrier-protein]--UDP-N-acetylglucosamine O-acyltransferase (261 aa).

Belongs to the transferase hexapeptide repeat family. LpxA subfamily. As to quaternary structure, homotrimer.

The protein localises to the cytoplasm. The catalysed reaction is a (3R)-hydroxyacyl-[ACP] + UDP-N-acetyl-alpha-D-glucosamine = a UDP-3-O-[(3R)-3-hydroxyacyl]-N-acetyl-alpha-D-glucosamine + holo-[ACP]. It participates in glycolipid biosynthesis; lipid IV(A) biosynthesis; lipid IV(A) from (3R)-3-hydroxytetradecanoyl-[acyl-carrier-protein] and UDP-N-acetyl-alpha-D-glucosamine: step 1/6. Involved in the biosynthesis of lipid A, a phosphorylated glycolipid that anchors the lipopolysaccharide to the outer membrane of the cell. This is Acyl-[acyl-carrier-protein]--UDP-N-acetylglucosamine O-acyltransferase from Paracoccus denitrificans (strain Pd 1222).